We begin with the raw amino-acid sequence, 208 residues long: Ribosomal RNA large subunit methyltransferase E (208 aa).

The S-adenosyl-L-methionine site is built by G63, W65, D83, D99, and D124. K164 (proton acceptor) is an active-site residue.

It belongs to the class I-like SAM-binding methyltransferase superfamily. RNA methyltransferase RlmE family.

It is found in the cytoplasm. It catalyses the reaction uridine(2552) in 23S rRNA + S-adenosyl-L-methionine = 2'-O-methyluridine(2552) in 23S rRNA + S-adenosyl-L-homocysteine + H(+). Specifically methylates the uridine in position 2552 of 23S rRNA at the 2'-O position of the ribose in the fully assembled 50S ribosomal subunit. The polypeptide is Ribosomal RNA large subunit methyltransferase E (Hamiltonella defensa subsp. Acyrthosiphon pisum (strain 5AT)).